The chain runs to 477 residues: Aspartyl/glutamyl-tRNA(Asn/Gln) amidotransferase subunit B (477 aa).

This sequence belongs to the GatB/GatE family. GatB subfamily. As to quaternary structure, heterotrimer of A, B and C subunits.

The enzyme catalyses L-glutamyl-tRNA(Gln) + L-glutamine + ATP + H2O = L-glutaminyl-tRNA(Gln) + L-glutamate + ADP + phosphate + H(+). It carries out the reaction L-aspartyl-tRNA(Asn) + L-glutamine + ATP + H2O = L-asparaginyl-tRNA(Asn) + L-glutamate + ADP + phosphate + 2 H(+). Allows the formation of correctly charged Asn-tRNA(Asn) or Gln-tRNA(Gln) through the transamidation of misacylated Asp-tRNA(Asn) or Glu-tRNA(Gln) in organisms which lack either or both of asparaginyl-tRNA or glutaminyl-tRNA synthetases. The reaction takes place in the presence of glutamine and ATP through an activated phospho-Asp-tRNA(Asn) or phospho-Glu-tRNA(Gln). The sequence is that of Aspartyl/glutamyl-tRNA(Asn/Gln) amidotransferase subunit B from Oenococcus oeni (strain ATCC BAA-331 / PSU-1).